Consider the following 136-residue polypeptide: Holo-[acyl-carrier-protein] synthase (136 aa).

Asp-8 and Glu-57 together coordinate Mg(2+).

It belongs to the P-Pant transferase superfamily. AcpS family. Requires Mg(2+) as cofactor.

Its subcellular location is the cytoplasm. It catalyses the reaction apo-[ACP] + CoA = holo-[ACP] + adenosine 3',5'-bisphosphate + H(+). Its function is as follows. Transfers the 4'-phosphopantetheine moiety from coenzyme A to a Ser of acyl-carrier-protein. In Methylobacterium radiotolerans (strain ATCC 27329 / DSM 1819 / JCM 2831 / NBRC 15690 / NCIMB 10815 / 0-1), this protein is Holo-[acyl-carrier-protein] synthase.